The following is a 365-amino-acid chain: Eukaryotic translation initiation factor 3 subunit H (365 aa).

In terms of domain architecture, MPN spans 15-166; that stretch reads ILLDSLVVMK…IRAWRLSTAA (152 aa). The segment at 276 to 295 is disordered; sequence KRQQENESRLARGDPPLPMD. Residues 277-287 show a composition bias toward basic and acidic residues; sequence RQQENESRLAR.

It belongs to the eIF-3 subunit H family. As to quaternary structure, component of the eukaryotic translation initiation factor 3 (eIF-3) complex.

It localises to the cytoplasm. In terms of biological role, component of the eukaryotic translation initiation factor 3 (eIF-3) complex, which is involved in protein synthesis of a specialized repertoire of mRNAs and, together with other initiation factors, stimulates binding of mRNA and methionyl-tRNAi to the 40S ribosome. The eIF-3 complex specifically targets and initiates translation of a subset of mRNAs involved in cell proliferation. In Caenorhabditis briggsae, this protein is Eukaryotic translation initiation factor 3 subunit H.